A 732-amino-acid polypeptide reads, in one-letter code: Guanylate cyclase soluble subunit alpha-2 (732 aa).

The disordered stretch occupies residues 1 to 58 (MSRRKISSESFSSLGSDYLETSPEEEGECPLSRLCWNGSRSPPGPLEPSPAAAAAAAA). Residues 49-58 (SPAAAAAAAA) are compositionally biased toward low complexity. The 128-residue stretch at 521–648 (TMLFSDIVGF…NNVTLASKFE (128 aa)) folds into the Guanylate cyclase domain.

The protein belongs to the adenylyl cyclase class-4/guanylyl cyclase family. In terms of assembly, heterodimer of an alpha and a beta chain. In terms of tissue distribution, isoform 1 is expressed in fetal brain, liver, colon, endothelium and testis. Isoform 2 is expressed only in liver, colon and endothelium.

Its subcellular location is the cytoplasm. It carries out the reaction GTP = 3',5'-cyclic GMP + diphosphate. Its activity is regulated as follows. Activated by nitric oxide in the presence of magnesium or manganese ions. In terms of biological role, has guanylyl cyclase on binding to the beta-1 subunit. Its function is as follows. Isoform 2 acts as a negative regulator of guanylyl cyclase activity as it forms non-functional heterodimers with the beta subunits. The sequence is that of Guanylate cyclase soluble subunit alpha-2 (GUCY1A2) from Homo sapiens (Human).